The sequence spans 182 residues: ADP-ribosylation factor-like protein 11 (182 aa).

A lipid anchor (N-myristoyl glycine) is attached at Gly2. Residues Gly19 to Thr26, Asp63 to Gln67, and Asn122 to Glu125 contribute to the GTP site.

It belongs to the small GTPase superfamily. Arf family.

In terms of biological role, may play a role in apoptosis. May act as a tumor suppressor. The sequence is that of ADP-ribosylation factor-like protein 11 (ARL11) from Bos taurus (Bovine).